A 372-amino-acid chain; its full sequence is uncharacterized protein (372 aa).

2 stretches are compositionally biased toward basic residues: residues Met-1–Lys-11 and Arg-38–Arg-48. A disordered region spans residues Met-1 to Trp-127. Over residues Gly-50–Glu-61 the composition is skewed to basic and acidic residues. Residues Gly-93–Pro-104 show a composition bias toward polar residues.

This is an uncharacterized protein from Psittacid herpesvirus 1 (isolate Amazon parrot/-/97-0001/1997) (PsHV-1).